Reading from the N-terminus, the 623-residue chain is Phosphatidylinositol-3-phosphatase SAC1 (623 aa).

Residues 1–523 (MTGPIVYVQN…SPFPDRRPVY (523 aa)) lie on the Cytoplasmic side of the membrane. The 340-residue stretch at 115–454 (LELHLKNSTF…ADAVSVAYSG (340 aa)) folds into the SAC domain. Residues K246 and K358 each participate in a glycyl lysine isopeptide (Lys-Gly) (interchain with G-Cter in ubiquitin) cross-link. Residues 524–544 (IQLIPMIICAALTVLGATIFF) form a helical membrane-spanning segment. Topologically, residues 545-552 (PKDRFTSS) are lumenal. A helical transmembrane segment spans residues 553 to 573 (KNLLYFAGASIVLALSTKFMF). Residues 574–623 (KNGIQFVNWPKLVDVGFLVVHQTHDKEQQFKGLKYAQSPKFSKPDPLKRD) lie on the Cytoplasmic side of the membrane.

Component of the SPOTS complex, at least composed of LCB1/2 (LCB1 and/or LCB2), ORM1/2 (ORM1 and/or ORM2), SAC1 and TSC3.

It is found in the endoplasmic reticulum membrane. It localises to the golgi apparatus membrane. It carries out the reaction a 1,2-diacyl-sn-glycero-3-phospho-(1D-myo-inositol-3-phosphate) + H2O = a 1,2-diacyl-sn-glycero-3-phospho-(1D-myo-inositol) + phosphate. The enzyme catalyses a 1,2-diacyl-sn-glycero-3-phospho-(1D-myo-inositol 4-phosphate) + H2O = a 1,2-diacyl-sn-glycero-3-phospho-(1D-myo-inositol) + phosphate. Its function is as follows. Phosphoinositide phosphatase which catalyzes the hydrolysis of phosphatidylinositol 3-phosphate (PtdIns(3)P) and phosphatidylinositol 4-phosphate (PtdIns(4)P). Has low activity towards phosphatidylinositol-3,5-bisphosphate (PtdIns(3,5)P2). May be involved in the coordination of the activities of the secretory pathway and the actin cytoskeleton. This is Phosphatidylinositol-3-phosphatase SAC1 (SAC1) from Saccharomyces cerevisiae (strain ATCC 204508 / S288c) (Baker's yeast).